Reading from the N-terminus, the 273-residue chain is Tyrosinase (273 aa).

Residues 1 to 18 (MLLFTMGLLLAILQPSTG) form the signal peptide. N-linked (GlcNAc...) asparagine glycosylation is found at asparagine 86, asparagine 111, and asparagine 161. The Cu cation site is built by histidine 180, histidine 202, and histidine 211. N-linked (GlcNAc...) asparagine glycosylation occurs at asparagine 230.

This sequence belongs to the tyrosinase family. It depends on Cu(2+) as a cofactor.

The protein localises to the melanosome membrane. The protein resides in the melanosome. It catalyses the reaction 2 L-dopa + O2 = 2 L-dopaquinone + 2 H2O. The catalysed reaction is L-tyrosine + O2 = L-dopaquinone + H2O. In terms of biological role, this is a copper-containing oxidase that functions in the formation of pigments such as melanins and other polyphenolic compounds. Catalyzes the initial and rate limiting step in the cascade of reactions leading to melanin production from tyrosine. In addition to hydroxylating tyrosine to DOPA (3,4-dihydroxyphenylalanine), also catalyzes the oxidation of DOPA to DOPA-quinone, and possibly the oxidation of DHI (5,6-dihydroxyindole) to indole-5,6 quinone. The sequence is that of Tyrosinase (TYR) from Coturnix japonica (Japanese quail).